Consider the following 88-residue polypeptide: Probable oxaloacetate decarboxylase gamma chain (88 aa).

Residues 13–35 form a helical membrane-spanning segment; the sequence is LMFSGMGFVIIFLLILIWAIGIV.

Belongs to the OadG family. In terms of assembly, heterotrimer of an alpha, a beta and a gamma subunit. It depends on Na(+) as a cofactor.

The protein resides in the cell membrane. It carries out the reaction oxaloacetate + 2 Na(+)(in) + H(+) = pyruvate + 2 Na(+)(out) + CO2. Catalyzes the decarboxylation of oxaloacetate coupled to Na(+) translocation. This is Probable oxaloacetate decarboxylase gamma chain from Mannheimia succiniciproducens (strain KCTC 0769BP / MBEL55E).